The chain runs to 716 residues: MSDSGASRLRRQLESGGFEARLYVKQLSQQSDGDRDLQEHRQRVQALAEETAQNLKRNVYQNYRQFIETAREISYLESEMYQLSHLLTEQKSSLESIPLALLPAAAAGASAGEDTAGAGPRERGAVQAGFLPGPAGVPREGSGTGEEGKQRTLTTLLEKVEGCRDLLETPGQYLVYNGDLVEYDADHMAQLQRVHGFLMNDCLLVATWLPQRRGMYRYNALYPLDRLAVVNVKDNPPMKDMFKLLMFPESRIFQAENAKIKREWLEVLEETKRALSDKRRREQEEAAAPRAPPPVTSKGSNPFEDEDDEELATPEAEEEKVDLSMEWIQELPEDLDVCIAQRDFEGAVDLLDKLNHYLEDKPSPPPVKELRAKVDERVRQLTEVLVFELSPDRSLRGGPKATRRAVSQLIRLGQCTKACELFLRNRAAAVHTAIRQLRIEGATLLYIHKLCHVFFTSLLETAREFETDFAGTDSGCYSAFVVWARSAMGMFVDAFSKQVFDSKESLSTAAECVKVAKEHCQQLGEIGLDLTFIIHALLVKDIQGALHSYKEIIIEATKHRNSEEMWRRMNLMTPEALGKLKEEMKSCGVSNFEQYTGDDCWVNLSYTVVAFTKQTMGFLEEALKLYFPELHMVLLESLVEIILVAVQHVDYSLRCEQDPEKKAFIRQNASFLYETVLPVVERRFEEGVGKPAKQLQDLRNASRLLRVNPESTTSVV.

Ser-15 carries the post-translational modification Phosphoserine. The tract at residues 129 to 150 is disordered; the sequence is GFLPGPAGVPREGSGTGEEGKQ. The 101-residue stretch at 173 to 273 folds into the PH domain; that stretch reads YLVYNGDLVE…WLEVLEETKR (101 aa). Positions 275–284 are enriched in basic and acidic residues; the sequence is LSDKRRREQE. The segment at 275–319 is disordered; that stretch reads LSDKRRREQEEAAAPRAPPPVTSKGSNPFEDEDDEELATPEAEEE. Positions 303–319 are enriched in acidic residues; that stretch reads FEDEDDEELATPEAEEE. At Thr-313 the chain carries Phosphothreonine.

Belongs to the EXO84 family. The exocyst complex is composed of EXOC1, EXOC2, EXOC3, EXOC4, EXOC5, EXOC6, EXOC7 and EXOC8. Interacts (via PH domain) with GTP-bound RALA and RALB. Interacts with SH3BP1; required for the localization of both SH3BP1 and the exocyst to the leading edge of migrating cells.

It is found in the cytoplasm. It localises to the perinuclear region. Its subcellular location is the cell projection. The protein resides in the growth cone. Its function is as follows. Component of the exocyst complex involved in the docking of exocytic vesicles with fusion sites on the plasma membrane. This Mus musculus (Mouse) protein is Exocyst complex component 8 (Exoc8).